We begin with the raw amino-acid sequence, 663 residues long: MTMVEHYPFKIHSDFEPQGDQPQAIKEIVEGIKAGKRHQTLLGATGTGKTFTMSNVIKEVGKPTLIIAHNKTLAGQLYSEFKEFFPENRVEYFVSYYDYYQPEAYVPSTDTFIEKDASINDEIDQLRHSATSALFERDDVIIIASVSCIYGLGNPEEYKDLVVSVRVGMEMDRSELLRKLVDVQYTRNDIDFQRGTFRVRGDVVEIFPASKEELCIRVEFFGDEIDRIREVNYLTGEVLKEREHFAIFPASHFVTREEKLKVAIERIEKELEERLKELRDENKLLEAQRLEQRTNYDLEMMREMGFCSGIENYSVHLTLRPLGSTPYTLLDYFGDDWLVMIDESHVTLPQVRGMYNGDRARKQVLVDHGFRLPSALDNRPLKFEEFEEKTKQLVYVSATPGPYEIEHTDKMVEQIIRPTGLLDPKIEVRPTENQIDDLLSEIQTRVERNERVLVTTLTKKMSEDLTTYMKEAGIKVNYLHSEIKTLERIEIIRDLRMGTYDVIVGINLLREGIDIPEVSLVVILDADKEGFLRSNRSLIQTIGRAARNDKGEVIMYADKMTDSMKYAIDETQRRREIQMKHNEKHGITPKTINKKIHDLISATVENDENNDKAQTVIPKKMTKKERQKTIDNIEKEMKQAAKDLDFEKATELRDMLFELKAEG.

The 388-residue stretch at 30 to 417 (EGIKAGKRHQ…TDKMVEQIIR (388 aa)) folds into the Helicase ATP-binding domain. ATP is bound at residue 43 to 50 (GATGTGKT). Positions 96–119 (YYDYYQPEAYVPSTDTFIEKDASI) match the Beta-hairpin motif. Positions 434–600 (QIDDLLSEIQ…TINKKIHDLI (167 aa)) constitute a Helicase C-terminal domain. The 36-residue stretch at 627–662 (QKTIDNIEKEMKQAAKDLDFEKATELRDMLFELKAE) folds into the UVR domain.

It belongs to the UvrB family. Forms a heterotetramer with UvrA during the search for lesions. Interacts with UvrC in an incision complex.

The protein localises to the cytoplasm. In terms of biological role, the UvrABC repair system catalyzes the recognition and processing of DNA lesions. A damage recognition complex composed of 2 UvrA and 2 UvrB subunits scans DNA for abnormalities. Upon binding of the UvrA(2)B(2) complex to a putative damaged site, the DNA wraps around one UvrB monomer. DNA wrap is dependent on ATP binding by UvrB and probably causes local melting of the DNA helix, facilitating insertion of UvrB beta-hairpin between the DNA strands. Then UvrB probes one DNA strand for the presence of a lesion. If a lesion is found the UvrA subunits dissociate and the UvrB-DNA preincision complex is formed. This complex is subsequently bound by UvrC and the second UvrB is released. If no lesion is found, the DNA wraps around the other UvrB subunit that will check the other stand for damage. This Staphylococcus aureus (strain COL) protein is UvrABC system protein B.